Here is a 316-residue protein sequence, read N- to C-terminus: Acetyl-coenzyme A carboxylase carboxyl transferase subunit alpha (316 aa).

Residues 39–293 (KLEEKNAQLT…KKHLQANLTN (255 aa)) form the CoA carboxyltransferase C-terminal domain.

It belongs to the AccA family. In terms of assembly, acetyl-CoA carboxylase is a heterohexamer composed of biotin carboxyl carrier protein (AccB), biotin carboxylase (AccC) and two subunits each of ACCase subunit alpha (AccA) and ACCase subunit beta (AccD).

The protein resides in the cytoplasm. The enzyme catalyses N(6)-carboxybiotinyl-L-lysyl-[protein] + acetyl-CoA = N(6)-biotinyl-L-lysyl-[protein] + malonyl-CoA. The protein operates within lipid metabolism; malonyl-CoA biosynthesis; malonyl-CoA from acetyl-CoA: step 1/1. Component of the acetyl coenzyme A carboxylase (ACC) complex. First, biotin carboxylase catalyzes the carboxylation of biotin on its carrier protein (BCCP) and then the CO(2) group is transferred by the carboxyltransferase to acetyl-CoA to form malonyl-CoA. In Coxiella burnetii (strain CbuK_Q154) (Coxiella burnetii (strain Q154)), this protein is Acetyl-coenzyme A carboxylase carboxyl transferase subunit alpha.